A 662-amino-acid polypeptide reads, in one-letter code: Transketolase (662 aa).

Histidine 28 lines the substrate pocket. Thiamine diphosphate contacts are provided by residues histidine 68 and 115-117 (GPL). A Mg(2+)-binding site is contributed by aspartate 156. Residues glycine 157 and asparagine 186 each contribute to the thiamine diphosphate site. Residues asparagine 186 and isoleucine 188 each contribute to the Mg(2+) site. Histidine 261, arginine 356, and serine 383 together coordinate substrate. Histidine 261 provides a ligand contact to thiamine diphosphate. Glutamate 410 (proton donor) is an active-site residue. Residue phenylalanine 436 participates in thiamine diphosphate binding. The substrate site is built by histidine 460, aspartate 468, and arginine 519.

The protein belongs to the transketolase family. As to quaternary structure, homodimer. The cofactor is Mg(2+). Requires Ca(2+) as cofactor. Mn(2+) is required as a cofactor. Co(2+) serves as cofactor. It depends on thiamine diphosphate as a cofactor.

The enzyme catalyses D-sedoheptulose 7-phosphate + D-glyceraldehyde 3-phosphate = aldehydo-D-ribose 5-phosphate + D-xylulose 5-phosphate. Its pathway is carbohydrate biosynthesis; Calvin cycle. The protein operates within carbohydrate degradation; pentose phosphate pathway. Catalyzes the transfer of a two-carbon ketol group from a ketose donor to an aldose acceptor, via a covalent intermediate with the cofactor thiamine pyrophosphate. The polypeptide is Transketolase (tkt) (Staphylococcus epidermidis (strain ATCC 12228 / FDA PCI 1200)).